Here is a 115-residue protein sequence, read N- to C-terminus: Putative HNH nuclease YajD (115 aa).

Residues 27-75 (CGRCSREFVYSNLRELTVHHIDHDHTNNPEDGSNWELLCLYCHDHEHSK) form the HNH domain.

Belongs to the HNH nuclease family.

This is Putative HNH nuclease YajD (yajD) from Escherichia coli O157:H7.